The following is a 300-amino-acid chain: Ecto-ADP-ribosyltransferase 4 (300 aa).

The signal sequence occupies residues 1–23 (MALWLPGGQLTLLLLLWVQQTPA). Over 24-269 (GSTEAPLKVD…QLLKACSKKC (246 aa)) the chain is Extracellular. 2 cysteine pairs are disulfide-bonded: Cys-48–Cys-259 and Cys-161–Cys-210. Residues 70–255 (KYYSRAWQKA…INLRSAGNMS (186 aa)) form the TR mART core domain. N-linked (GlcNAc...) asparagine glycosylation is found at Asn-110 and Asn-157. Gln-185 contributes to the NAD(+) binding site. N-linked (GlcNAc...) asparagine glycosylation is present at Asn-201. Ser-219 contacts NAD(+). The N-linked (GlcNAc...) asparagine glycan is linked to Asn-253. Ala-264 carries the GPI-anchor amidated alanine lipid modification. Residues 265 to 300 (CSKKCAPAPVVIGCLFLVTVVISSKSRAQRNLLAPF) constitute a propeptide, removed in mature form. Residues 270–286 (APAPVVIGCLFLVTVVI) traverse the membrane as a helical segment. The Cytoplasmic portion of the chain corresponds to 287–300 (SSKSRAQRNLLAPF).

This sequence belongs to the Arg-specific ADP-ribosyltransferase family.

The protein localises to the membrane. It localises to the cell membrane. The catalysed reaction is L-arginyl-[protein] + NAD(+) = N(omega)-(ADP-D-ribosyl)-L-arginyl-[protein] + nicotinamide + H(+). The protein is Ecto-ADP-ribosyltransferase 4 (Art4) of Mus musculus (Mouse).